The following is a 360-amino-acid chain: Phospho-N-acetylmuramoyl-pentapeptide-transferase (360 aa).

10 helical membrane passes run 26 to 46, 74 to 94, 97 to 117, 134 to 154, 168 to 188, 199 to 219, 236 to 256, 263 to 283, 288 to 308, and 338 to 358; these read AILG…KLIE, MGGL…GDLG, YVWV…IDDY, YILQ…TAAN, VMPQ…VGAS, GLAI…AYLS, SGEL…FLWF, VFMG…IAVL, ILLV…ILQV, and VIVR…ATLK.

It belongs to the glycosyltransferase 4 family. MraY subfamily. It depends on Mg(2+) as a cofactor.

The protein localises to the cell inner membrane. The catalysed reaction is UDP-N-acetyl-alpha-D-muramoyl-L-alanyl-gamma-D-glutamyl-meso-2,6-diaminopimeloyl-D-alanyl-D-alanine + di-trans,octa-cis-undecaprenyl phosphate = di-trans,octa-cis-undecaprenyl diphospho-N-acetyl-alpha-D-muramoyl-L-alanyl-D-glutamyl-meso-2,6-diaminopimeloyl-D-alanyl-D-alanine + UMP. It functions in the pathway cell wall biogenesis; peptidoglycan biosynthesis. Its function is as follows. Catalyzes the initial step of the lipid cycle reactions in the biosynthesis of the cell wall peptidoglycan: transfers peptidoglycan precursor phospho-MurNAc-pentapeptide from UDP-MurNAc-pentapeptide onto the lipid carrier undecaprenyl phosphate, yielding undecaprenyl-pyrophosphoryl-MurNAc-pentapeptide, known as lipid I. In Shewanella baltica (strain OS185), this protein is Phospho-N-acetylmuramoyl-pentapeptide-transferase.